Reading from the N-terminus, the 123-residue chain is Protein Wnt-3b (123 aa).

Ser-1 carries O-palmitoleoyl serine; by PORCN lipidation. An intrachain disulfide couples Cys-89 to Cys-104. An N-linked (GlcNAc...) asparagine glycan is attached at Asn-90.

It belongs to the Wnt family. Palmitoleoylation is required for efficient binding to frizzled receptors. Depalmitoleoylation leads to Wnt signaling pathway inhibition.

The protein resides in the secreted. The protein localises to the extracellular space. Its subcellular location is the extracellular matrix. Ligand for members of the frizzled family of seven transmembrane receptors. Probable developmental protein. May be a signaling molecule which affects the development of discrete regions of tissues. Is likely to signal over only few cell diameters. The sequence is that of Protein Wnt-3b (WNT-3B) from Plethodon jordani (Red-cheeked salamander).